We begin with the raw amino-acid sequence, 421 residues long: MTLAASSQRSQIIRSKFRSVLQLRIHRRNQDCTSDSDPWISASGPALAPALPTVPASFLVSPGVLSPEPAYCPWRAPKKESPKNSQHWKEPKVRGNLTYHLYMPPEQRQGPRANLQVERSTLGPPDPPLWEKNSQRPHPRMKPSSAGVSSPSPPSHKLELQTLKLEELTVSELRQQLRLRGLPVSGTKAMLLERMRGGTPPRERPKPRREDKEAAAPWPRLKPKALGTTRLPSTVKASATNRRLKFSGATDPLGAAPAPASVPAPTPSPALAPTPTPAPVPAPAPAPFPTPPASLTLEEELQEAIRRAQLLPNRNIDDILEDQVEPDDLLPPVPLDFPGSFDLLSPSPDSEGFSSVFSSSLPSPTSSLSPSPRALTDSLDWLEALSGGPPLGSGPPGPSIFSADLSDPSGSLLWELLPDPW.

The short motif at isoleucine 12–arginine 28 is the MEF2-binding element. Disordered regions lie at residues proline 104 to histidine 156, lysine 188 to threonine 296, and aspartate 322 to serine 406. The 35-residue stretch at leucine 165 to threonine 199 folds into the SAP domain. The segment covering leucine 191–alanine 214 has biased composition (basic and acidic residues). Residues arginine 208 to tryptophan 421 form a transcription activation region. The span at arginine 230–asparagine 241 shows a compositional bias: polar residues. Over residues alanine 260–proline 292 the composition is skewed to pro residues. Low complexity predominate over residues serine 347–proline 372.

Interacts with MEF2C. In terms of tissue distribution, expressed in skeletal muscle, brain, placenta and spleen.

The protein localises to the nucleus. Transcriptional coactivator. Stimulates the transcriptional activity of MEF2C. Stimulates MYOD1 activity in part via MEF2, resulting in an enhancement of skeletal muscle differentiation. This chain is MEF2-activating motif and SAP domain-containing transcriptional regulator (Mamstr), found in Mus musculus (Mouse).